A 366-amino-acid polypeptide reads, in one-letter code: Endophilin-A (366 aa).

The BAR domain maps to 18 to 248 (TEKMGGAEGT…LQEKRSEAES (231 aa)). Residues 227 to 247 (QCADVLRGLQETLQEKRSEAE) are a coiled coil. A disordered region spans residues 266–295 (GGGGGLNEDGTPSHISSSASPLPSPMRSPA). The span at 277–294 (PSHISSSASPLPSPMRSP) shows a compositional bias: low complexity. The SH3 domain maps to 305 to 364 (QQQPCCQALYDFDPENPGELGFKENDIITLLNRVDDNWYEGSVNGRTGYFPQSYVQVQVP).

Belongs to the endophilin family.

Its subcellular location is the cytoplasm. It is found in the membrane. Required presynaptically at the neuromuscular junction. Implicated in synaptic vesicle endocytosis. The protein is Endophilin-A of Drosophila willistoni (Fruit fly).